Reading from the N-terminus, the 420-residue chain is Glucose-1-phosphate adenylyltransferase (420 aa).

Residues Tyr107, Gly172, Glu187–Lys188, and Ser205 contribute to the alpha-D-glucose 1-phosphate site.

It belongs to the bacterial/plant glucose-1-phosphate adenylyltransferase family. Homotetramer.

The enzyme catalyses alpha-D-glucose 1-phosphate + ATP + H(+) = ADP-alpha-D-glucose + diphosphate. It participates in glycan biosynthesis; glycogen biosynthesis. In terms of biological role, involved in the biosynthesis of ADP-glucose, a building block required for the elongation reactions to produce glycogen. Catalyzes the reaction between ATP and alpha-D-glucose 1-phosphate (G1P) to produce pyrophosphate and ADP-Glc. The chain is Glucose-1-phosphate adenylyltransferase from Rhizobium leguminosarum bv. trifolii (strain WSM2304).